A 320-amino-acid chain; its full sequence is Porphobilinogen deaminase (320 aa).

Cys-241 bears the S-(dipyrrolylmethanemethyl)cysteine mark.

The protein belongs to the HMBS family. In terms of assembly, monomer. It depends on dipyrromethane as a cofactor.

The catalysed reaction is 4 porphobilinogen + H2O = hydroxymethylbilane + 4 NH4(+). The protein operates within porphyrin-containing compound metabolism; protoporphyrin-IX biosynthesis; coproporphyrinogen-III from 5-aminolevulinate: step 2/4. Functionally, tetrapolymerization of the monopyrrole PBG into the hydroxymethylbilane pre-uroporphyrinogen in several discrete steps. In Thermobifida fusca (strain YX), this protein is Porphobilinogen deaminase.